The primary structure comprises 155 residues: Protein SprT-like (155 aa).

Residues 7 to 145 (QRHMEEVSLQ…GSCGGKLIQT (139 aa)) form the SprT-like domain. Histidine 67 serves as a coordination point for Zn(2+). Glutamate 68 is an active-site residue. Histidine 71 is a Zn(2+) binding site.

This sequence belongs to the SprT family. Requires Zn(2+) as cofactor.

It is found in the cytoplasm. The sequence is that of Protein SprT-like from Listeria monocytogenes serovar 1/2a (strain ATCC BAA-679 / EGD-e).